Consider the following 149-residue polypeptide: Nucleoside diphosphate kinase (149 aa).

ATP contacts are provided by lysine 9, phenylalanine 57, arginine 85, threonine 91, arginine 102, and asparagine 112. The Pros-phosphohistidine intermediate role is filled by histidine 115.

The protein belongs to the NDK family. As to quaternary structure, homotetramer. Requires Mg(2+) as cofactor.

The protein resides in the cytoplasm. It carries out the reaction a 2'-deoxyribonucleoside 5'-diphosphate + ATP = a 2'-deoxyribonucleoside 5'-triphosphate + ADP. It catalyses the reaction a ribonucleoside 5'-diphosphate + ATP = a ribonucleoside 5'-triphosphate + ADP. Functionally, major role in the synthesis of nucleoside triphosphates other than ATP. The ATP gamma phosphate is transferred to the NDP beta phosphate via a ping-pong mechanism, using a phosphorylated active-site intermediate. The sequence is that of Nucleoside diphosphate kinase from Nostoc sp. (strain PCC 7120 / SAG 25.82 / UTEX 2576).